The primary structure comprises 246 residues: Probable transcriptional regulatory protein CTC_02215 (246 aa).

This sequence belongs to the TACO1 family.

It is found in the cytoplasm. The polypeptide is Probable transcriptional regulatory protein CTC_02215 (Clostridium tetani (strain Massachusetts / E88)).